We begin with the raw amino-acid sequence, 274 residues long: Large ribosomal subunit protein uL2cz/uL2cy (274 aa).

Disordered regions lie at residues 1–23 (MAIH…SKVK) and 224–274 (NPVD…RRSK).

This sequence belongs to the universal ribosomal protein uL2 family. In terms of assembly, part of the 50S ribosomal subunit.

The protein localises to the plastid. The protein resides in the chloroplast. The sequence is that of Large ribosomal subunit protein uL2cz/uL2cy (rpl2-A) from Lactuca sativa (Garden lettuce).